A 1360-amino-acid chain; its full sequence is Activating molecule in BECN1-regulated autophagy protein 1B (1360 aa).

WD repeat units lie at residues 50–89 (DNPR…CLHS), 92–132 (GHRR…ESWF), and 134–174 (ESNV…AVVK). Over residues 249-258 (RSSGAQANDQ) the composition is skewed to polar residues. Disordered regions lie at residues 249–277 (RSSG…FQYP), 315–364 (PTGL…NSAH), 412–490 (GVET…QRNN), 514–573 (ELER…RCRS), 587–616 (WERS…EDPG), 664–688 (PTVS…NPDE), and 754–796 (TLSN…MPRN). Over residues 319–333 (QPSDSTQPQTQSGPS) the composition is skewed to low complexity. The span at 350–361 (AFSSVFSGTAGN) shows a compositional bias: polar residues. Positions 428-437 (SSSSMDLLSL) are enriched in low complexity. Composition is skewed to polar residues over residues 443–454 (GSSSSPIYTSAT) and 473–490 (DGTS…QRNN). A compositionally biased stretch (low complexity) spans 590–607 (SGQTSSSSSSQEGPSWPL). Over residues 754-768 (TLSNSQADSQSNNPS) the composition is skewed to polar residues. The segment covering 775-784 (SDGDYEDIEE) has biased composition (acidic residues). 2 short sequence motifs (TQT motif) span residues 1109–1111 (TQT) and 1121–1123 (TQT). Disordered stretches follow at residues 1120-1142 (ETQT…TSRH) and 1241-1360 (SQTS…LYGR). 2 stretches are compositionally biased toward polar residues: residues 1129 to 1142 (SAST…TSRH) and 1241 to 1252 (SQTSVRTAQGGN). The segment covering 1278-1288 (APGPSGSSGAP) has biased composition (low complexity). Over residues 1311 to 1321 (FGDRQPDDVQR) the composition is skewed to basic and acidic residues. A compositionally biased stretch (low complexity) spans 1329 to 1347 (NMSNHSNNNNNDHSNSYSE). The span at 1348–1360 (SRSRDYPDDLYGR) shows a compositional bias: basic and acidic residues.

It belongs to the WD repeat AMBRA1 family. As to quaternary structure, component of the DCX(AMBRA1) E3 ubiquitin ligase complex.

It is found in the endoplasmic reticulum. Its subcellular location is the cytoplasm. It localises to the cytoskeleton. The protein resides in the cytoplasmic vesicle. The protein localises to the autophagosome. It is found in the mitochondrion. Its subcellular location is the cytosol. It localises to the nucleus. The protein resides in the cell junction. The protein localises to the focal adhesion. It participates in protein modification; protein ubiquitination. Its function is as follows. Substrate-recognition component of a DCX (DDB1-CUL4-X-box) E3 ubiquitin-protein ligase complex involved in cell cycle control and autophagy. The DCX(AMBRA1) complex specifically mediates the polyubiquitination of target proteins. Acts as an upstream master regulator of the transition from G1 to S cell phase: ambra1b specifically recognizes and binds phosphorylated cyclin-D (ccnd1, ccnd2 and ccnd3), leading to cyclin-D ubiquitination by the DCX(AMBRA1) complex and subsequent degradation. Acts as a regulator of Cul5-RING (CRL5) E3 ubiquitin-protein ligase complexes by mediating ubiquitination and degradation of Elongin-C (eloc) component of CRL5 complexes. Acts as a key regulator of autophagy by modulating the BECN1-PIK3C3 complex: controls protein turnover during neuronal development, and regulates normal cell survival and proliferation. In normal conditions, ambra1b is tethered to the cytoskeleton via interaction with dyneins light chains. Upon autophagy induction, ambra1b is released from the cytoskeletal docking site to induce autophagosome nucleation by mediating ubiquitination of proteins involved in autophagy. Also acts as an activator of mitophagy. Required for skeletal muscle development. This is Activating molecule in BECN1-regulated autophagy protein 1B from Danio rerio (Zebrafish).